The sequence spans 230 residues: MASLKLSPSSPISISKVGVIPSSKKGLSFLVKAEHHSSSSSSHLQDKCQRRLIVTFGVVAPWISLLSRAPLSFAAESKKGFLAVSDNKDAYAFLYPFGWQEVVIEGQDKVYKDVIEPLESVSVNLVPTSKQTIKEFGPPKQIAETLIKKVLAPPNQKTTLIDASEHDVDGKTYYQFEFTVQARNYTRHALGTITVFNGNFYTLTTGANERRWEKMKDRLHTVVDSFKITV.

Belongs to the PsbP family.

It is found in the plastid. Its subcellular location is the chloroplast thylakoid lumen. Functionally, required for efficient repair of photodamaged PSII, but not tightly associated with the complex. The chain is PsbP-like protein 1, chloroplastic (PPL1) from Arabidopsis thaliana (Mouse-ear cress).